A 174-amino-acid chain; its full sequence is CEN-like protein 1 (174 aa).

The protein belongs to the phosphatidylethanolamine-binding protein family. Expressed in vegetative axillary meristems but not in the main shoot meristem.

The protein localises to the cytoplasm. May form complexes with phosphorylated ligands by interfering with kinases and their effectors. This chain is CEN-like protein 1 (CET1), found in Nicotiana tabacum (Common tobacco).